We begin with the raw amino-acid sequence, 919 residues long: UPF0182 protein SUN_1015 (919 aa).

The next 7 membrane-spanning stretches (helical) occupy residues 8 to 28 (IIIT…VDYY), 51 to 71 (ILSF…HIHF), 102 to 122 (AVAW…GSYA), 158 to 178 (VYQF…IGVL), 207 to 227 (LTAF…YNIL), 246 to 266 (IPAY…LFFY), and 274 to 294 (VIVS…WIYP).

The protein belongs to the UPF0182 family.

Its subcellular location is the cell membrane. The sequence is that of UPF0182 protein SUN_1015 from Sulfurovum sp. (strain NBC37-1).